The following is a 390-amino-acid chain: ATP-sensitive inward rectifier potassium channel 11 (390 aa).

Residues methionine 1–aspartate 65 lie on the Cytoplasmic side of the membrane. Residues asparagine 48 and arginine 50 each contribute to the ATP site. Residues leucine 66–leucine 92 traverse the membrane as a helical segment. Residues isoleucine 93–serine 116 lie on the Extracellular side of the membrane. Cysteine 110 and cysteine 142 form a disulfide bridge. Positions phenylalanine 117–phenylalanine 133 form an intramembrane region, discontinuously helical; Pore-forming. Residues threonine 130 and phenylalanine 133 each coordinate K(+). A Selectivity filter motif is present at residues threonine 130 to glycine 135. The Extracellular portion of the chain corresponds to glycine 134–cysteine 142. A helical transmembrane segment spans residues proline 143 to threonine 171. Topologically, residues serine 172 to serine 390 are cytoplasmic. Position 176 (arginine 176) interacts with a 1,2-diacyl-sn-glycero-3-phospho-(1D-myo-inositol-4,5-bisphosphate). Tyrosine 330 lines the ATP pocket. Phosphothreonine; by MAPK1 is present on threonine 341. Residue serine 385 is modified to Phosphoserine; by MAPK1.

Belongs to the inward rectifier-type potassium channel (TC 1.A.2.1) family. KCNJ11 subfamily. As to quaternary structure, homotetramer; the homotetramer binds four ATP molecules (one ATP per subunit). Forms an heterooctamer with ABCC8/SUR1; one KCNJ11 homotetramer interacts with four ABCC8/SUR1 molecules. Interacts with ABCC9/SUR2. Post-translationally, phosphorylation by MAPK1 results in changes in channel gating that destabilize the closed states and reduce the ATP sensitivity.

It is found in the membrane. It carries out the reaction K(+)(in) = K(+)(out). KATP channels are regulated by cytoplasmic ATP/ADP ratios; ATP inhibits the channel by closing the pore, while ADP activates the channel. Activated by phosphatidylinositol 4,5-biphosphate (PtdIns(4,5)P2). Functionally, inward rectifier potassium channel that forms the pore of ATP-sensitive potassium channels (KATP), regulating potassium permeability as a function of cytoplasmic ATP and ADP concentrations in many different cells. Inward rectifier potassium channels are characterized by a greater tendency to allow potassium to flow into the cell rather than out of it. Their voltage dependence is regulated by the concentration of extracellular potassium; as external potassium is raised, the voltage range of the channel opening shifts to more positive voltages. The inward rectification is mainly due to the blockage of outward current by internal magnesium. Can be blocked by extracellular barium. In pancreatic cells, it forms KATP channels with ABCC8/SUR1. Can form cardiac and smooth muscle-type KATP channels with ABCC9. The chain is ATP-sensitive inward rectifier potassium channel 11 (KCNJ11) from Cavia porcellus (Guinea pig).